An 825-amino-acid chain; its full sequence is Thioredoxin domain-containing protein 16 (825 aa).

A signal peptide spans 1–27 (MFSGFNVFRVGISFVIMCIFYMPTVNS). The Thioredoxin domain occupies 392–495 (LTVELTEETF…EDLLKFIQLN (104 aa)). C449 and C456 are disulfide-bonded. N460 carries N-linked (GlcNAc...) asparagine glycosylation. The disordered stretch occupies residues 762–787 (RKVPKCMKETDVQENDKEQHEDKSAV). Over residues 767-787 (CMKETDVQENDKEQHEDKSAV) the composition is skewed to basic and acidic residues. Residues 816–819 (DKEL) carry the Mediates endoplasmic reticulum retention motif.

Interacts with FOXRED2. In terms of processing, glycosylated.

It is found in the secreted. Its subcellular location is the endoplasmic reticulum lumen. This Homo sapiens (Human) protein is Thioredoxin domain-containing protein 16.